A 625-amino-acid polypeptide reads, in one-letter code: DNA-directed RNA polymerase subunit gamma (625 aa).

Zn(2+) contacts are provided by Cys-71, Cys-73, Cys-86, and Cys-89. Mg(2+)-binding residues include Asp-467, Asp-469, and Asp-471.

Belongs to the RNA polymerase beta' chain family. RpoC1 subfamily. In terms of assembly, in cyanobacteria the RNAP catalytic core is composed of 2 alpha, 1 beta, 1 beta', 1 gamma and 1 omega subunit. When a sigma factor is associated with the core the holoenzyme is formed, which can initiate transcription. Mg(2+) serves as cofactor. Zn(2+) is required as a cofactor.

It carries out the reaction RNA(n) + a ribonucleoside 5'-triphosphate = RNA(n+1) + diphosphate. DNA-dependent RNA polymerase catalyzes the transcription of DNA into RNA using the four ribonucleoside triphosphates as substrates. This chain is DNA-directed RNA polymerase subunit gamma, found in Trichormus variabilis (strain ATCC 29413 / PCC 7937) (Anabaena variabilis).